A 228-amino-acid chain; its full sequence is Ribose-5-phosphate isomerase A (228 aa).

Substrate is bound by residues 29–32 (TGST), 85–88 (DGAD), and 98–101 (KGGG). Glu-107 functions as the Proton acceptor in the catalytic mechanism. Lys-125 serves as a coordination point for substrate.

This sequence belongs to the ribose 5-phosphate isomerase family. As to quaternary structure, homodimer.

It catalyses the reaction aldehydo-D-ribose 5-phosphate = D-ribulose 5-phosphate. Its pathway is carbohydrate degradation; pentose phosphate pathway; D-ribose 5-phosphate from D-ribulose 5-phosphate (non-oxidative stage): step 1/1. Functionally, catalyzes the reversible conversion of ribose-5-phosphate to ribulose 5-phosphate. The polypeptide is Ribose-5-phosphate isomerase A (Staphylococcus aureus (strain Mu50 / ATCC 700699)).